A 208-amino-acid chain; its full sequence is MQRWSGVLLISLCCLLRGALAYTEPIYEIVEEDIPAEDIEVTRTNEKQDGRVFSKRDFDGAMPGVLRFGKRGGVWEKRESSVQKKEMPGVLRFGKRAYFDEKKSVPGVLRFGKRSYFDEKKSVPGVLRFGKRDVPMDKREIPGVLRFGKRDYMADSFDKRSEVPGVLRFGKRDVPGVLRFGKRSDLEEHYAGVLLKKSVPGVLRFGRK.

The N-terminal stretch at 1–21 is a signal peptide; sequence MQRWSGVLLISLCCLLRGALA. Residues 22–83 constitute a propeptide that is removed on maturation; that stretch reads YTEPIYEIVE…VWEKRESSVQ (62 aa). Residue Phe93 is modified to Phenylalanine amide. The propeptide occupies 97-101; that stretch reads AYFDE. Phe111 carries the post-translational modification Phenylalanine amide. The propeptide occupies 115–119; the sequence is SYFDE. Phe129 is subject to Phenylalanine amide. Positions 133 to 137 are excised as a propeptide; sequence DVPMD. Phe147 carries the post-translational modification Phenylalanine amide. Positions 151–158 are excised as a propeptide; sequence DYMADSFD. Phe169 and Phe180 each carry phenylalanine amide. A propeptide spanning residues 184–195 is cleaved from the precursor; it reads SDLEEHYAGVLL. At Phe205 the chain carries Phenylalanine amide.

This sequence belongs to the FARP (FMRFamide related peptide) family. May be processed by convertase egl-3. Expressed in head neurons and weakly in ventral nerve cord. Expressed in the interneurons AVA, AIY and RIG, the motor neuron RIM and the pharyngeal neurons M2 and M3. EMPGVLRF-amide: Expressed in cholinergic pharyngeal motoneurons M2 and M3.

The protein resides in the secreted. Functionally, FMRFamide-like neuropeptides. Ligand to G-protein coupled receptor npr-1. Involved in modulating locomotion quiescence during the sleep-like state called lethargus which occurs during molting between larval and adult stages, acting via npr-1. Together with flp-1, plays a homeostatic role by acting on the GABAergic neural transmission at neuromuscular junctions to prevent overexcitation of the locomotor circuit. Plays a role in the navigational capacity of sperm and the targeting of sperm derived from males to the fertilization site in the uterus of hermaphrodites. In terms of biological role, SVPGVLRF-amide: Excites muscle tension. Its function is as follows. Activates the G-protein coupled receptor npr-1 more effectively than other flp-18 peptides. Inhibits the activity of dissected pharyngeal myogenic muscle system. The protein is FMRFamide-like neuropeptide 18 of Caenorhabditis elegans.